We begin with the raw amino-acid sequence, 108 residues long: Nucleoid-associated protein Bmul_1447/BMULJ_01796 (108 aa).

The segment at 84 to 108 (EATSQEKMSGMTSGLPLPPGFKLPF) is disordered. The segment covering 85–95 (ATSQEKMSGMT) has biased composition (polar residues). A compositionally biased stretch (pro residues) spans 99–108 (PLPPGFKLPF).

This sequence belongs to the YbaB/EbfC family. In terms of assembly, homodimer.

It is found in the cytoplasm. It localises to the nucleoid. In terms of biological role, binds to DNA and alters its conformation. May be involved in regulation of gene expression, nucleoid organization and DNA protection. The chain is Nucleoid-associated protein Bmul_1447/BMULJ_01796 from Burkholderia multivorans (strain ATCC 17616 / 249).